Reading from the N-terminus, the 230-residue chain is 5'-methylthioadenosine/S-adenosylhomocysteine nucleosidase (230 aa).

E12 serves as the catalytic Proton acceptor. Substrate-binding positions include G78, I153, and 174–175 (ME). The Proton donor role is filled by D198.

It belongs to the PNP/UDP phosphorylase family. MtnN subfamily.

The catalysed reaction is S-adenosyl-L-homocysteine + H2O = S-(5-deoxy-D-ribos-5-yl)-L-homocysteine + adenine. The enzyme catalyses S-methyl-5'-thioadenosine + H2O = 5-(methylsulfanyl)-D-ribose + adenine. It carries out the reaction 5'-deoxyadenosine + H2O = 5-deoxy-D-ribose + adenine. Its pathway is amino-acid biosynthesis; L-methionine biosynthesis via salvage pathway; S-methyl-5-thio-alpha-D-ribose 1-phosphate from S-methyl-5'-thioadenosine (hydrolase route): step 1/2. Functionally, catalyzes the irreversible cleavage of the glycosidic bond in both 5'-methylthioadenosine (MTA) and S-adenosylhomocysteine (SAH/AdoHcy) to adenine and the corresponding thioribose, 5'-methylthioribose and S-ribosylhomocysteine, respectively. Also cleaves 5'-deoxyadenosine, a toxic by-product of radical S-adenosylmethionine (SAM) enzymes, into 5-deoxyribose and adenine. This chain is 5'-methylthioadenosine/S-adenosylhomocysteine nucleosidase, found in Shewanella halifaxensis (strain HAW-EB4).